The following is a 642-amino-acid chain: Voltage-gated potassium channel KCNC2 (642 aa).

Residues 1 to 233 lie on the Cytoplasmic side of the membrane; the sequence is MGKIESNERV…EDPYSSRAAR (233 aa). The tract at residues 45 to 98 is disordered; it reads DCLTAAGDKLQPLPPPLSPPPRPPPLSPVPSGCFEGGAGNCSSHGGNGGNGGSD. Positions 56–72 are enriched in pro residues; the sequence is PLPPPLSPPPRPPPLSP. The segment covering 78 to 98 has biased composition (gly residues); it reads FEGGAGNCSSHGGNGGNGGSD. Zn(2+)-binding residues include His128, Cys134, Cys155, and Cys156. The helical transmembrane segment at 234 to 254 threads the bilayer; sequence FIAFASLFFILVSITTFCLET. N-linked (GlcNAc...) asparagine glycans are attached at residues Asn263 and Asn270. The helical transmembrane segment at 287 to 307 threads the bilayer; that stretch reads TYVEGVCVVWFTFEFLVRIVF. The Cytoplasmic segment spans residues 308–317; it reads SPNKLEFIKN. Residues 318–338 traverse the membrane as a helical segment; it reads LLNIIDFVAILPFYLEVGLSG. A helical; Voltage-sensor transmembrane segment spans residues 350–372; that stretch reads FLRVVRFVRILRIFKLTRHFVGL. The Cytoplasmic segment spans residues 373 to 385; the sequence is RVLGHTLRASTNE. The helical transmembrane segment at 386–406 threads the bilayer; sequence FLLLIIFLALGVLIFATMIYY. K(+) contacts are provided by Thr441, Leu442, Gly443, and Tyr444. Residues 441-446 carry the Selectivity filter motif; sequence TLGYGD. Residues 457-477 form a helical membrane-spanning segment; it reads VGALCALAGVLTIAMPVPVIV. The Cytoplasmic portion of the chain corresponds to 478–642; it reads NNFGMYYSLA…RSRSPIPSIL (165 aa). Residues 542–576 are disordered; the sequence is SVLSGDDSTGSEPPLSPPERLPIRRSSTRDKNRRG. Ser604 is modified (phosphoserine).

This sequence belongs to the potassium channel family. C (Shaw) (TC 1.A.1.2) subfamily. Kv3.2/KCNC2 sub-subfamily. Homotetramer and heterotetramer with other channel-forming alpha subunits, such as KCNC1. Interacts with KCNC1. Homotetramer or heterotetramer channel activity is regulated by association with modulating ancillary subunits such as KCNE1, KCNE2 and KCNE3, creating a functionally diverse range of channel complexes. Interacts with KCNE1, KCNE2 and KCNE3. In terms of processing, phosphorylated by PKA in cortical synaptosomes. cAMP-dependent phosphorylation inhibits channel activity. Histamine H2 receptor- and PKA-induced phosphorylation extends action potential spike duration, reduces action potential spike amplitude, sustains maximum firing frequency in hippocampal interneurons; also reduces the incidence of high-frequency oscillations in hippocampal CA3 pyramidal cell layers. In terms of tissue distribution, weakly expressed in the brain at postnatal age day 7 (P7) and increased at P60. Not detectable in newborn hippocampus. Expressed weakly at P7 in the early developing hippocampus, increasing progressively and reaching a plateau of expression at P14 that is maintained throughout P51. Expressed in paravalbumin- and somatostain-containing inhibitory interneurons of the hippocampus; in the CA1/CA3 stratum oriens-alveus and stratum pyramidale and in cells within the hilus and subgranular layer of the dentate gyrus (DG). Strongly expressed in parvalbumin (PV)-containing fast-spiking GABAergic inhibitor interneurons in deep cortical layers V and VI. Also expressed in non-fast-spiking calbindin (CB)- and/or somatostatin (SOM)-containing interneurons in deep cortical layers V and VI. Expressed in starburst amacrine cells of the retina in the inner nuclear layer (INL) and ganglion cell layer (GCL). Expressed in the suprachiasmatic nucleus (SCN) (at protein level). Expressed in the early developing brain, increasing progressively until P14.

It localises to the cell membrane. Its subcellular location is the membrane. The protein resides in the perikaryon. It is found in the cell projection. The protein localises to the axon. It localises to the dendrite. Its subcellular location is the postsynaptic cell membrane. The protein resides in the presynaptic cell membrane. It is found in the synapse. The protein localises to the synaptosome. It localises to the apical cell membrane. Its subcellular location is the basolateral cell membrane. It carries out the reaction K(+)(in) = K(+)(out). Its activity is regulated as follows. Inhibited by millimolar levels of tetraethylammonium (TEA). Contrary to other channels, inhibited only by millimolar levels of 4-aminopyridine (4-AP). Inhibited by Stichodactyla helianthus peptide ShK. In terms of biological role, voltage-gated potassium channel that mediates transmembrane potassium transport in excitable membranes, primarily in the brain. Contributes to the regulation of the fast action potential repolarization and in sustained high-frequency firing in neurons of the central nervous system. Homotetramer channels mediate delayed-rectifier voltage-dependent potassium currents that activate rapidly at high-threshold voltages and inactivate slowly. Forms tetrameric channels through which potassium ions pass in accordance with their electrochemical gradient. The channel alternates between opened and closed conformations in response to the voltage difference across the membrane. Can form functional homotetrameric and heterotetrameric channels that contain variable proportions of KCNC1, and possibly other family members as well; channel properties depend on the type of alpha subunits that are part of the channel. Channel properties may be modulated by either the association with ancillary subunits, such as KCNE1, KCNE2 and KCNE3 or indirectly by nitric oxide (NO) through a cGMP- and PKG-mediated signaling cascade, slowing channel activation and deactivation of delayed rectifier potassium channels. Contributes to fire sustained trains of very brief action potentials at high frequency in thalamocortical and suprachiasmatic nucleus (SCN) neurons, in hippocampal and neocortical interneurons and in retinal ganglion cells. Sustained maximal action potential firing frequency in inhibitory hippocampal interneurons is negatively modulated by histamine H2 receptor activation in a cAMP- and protein kinase (PKA) phosphorylation-dependent manner. Plays a role in maintaining the fidelity of synaptic transmission in neocortical GABAergic interneurons by generating action potential (AP) repolarization at nerve terminals, thus reducing spike-evoked calcium influx and GABA neurotransmitter release. Required for long-range synchronization of gamma oscillations over distance in the neocortex. Contributes to the modulation of the circadian rhythm of spontaneous action potential firing in suprachiasmatic nucleus (SCN) neurons in a light-dependent manner. This Mus musculus (Mouse) protein is Voltage-gated potassium channel KCNC2.